We begin with the raw amino-acid sequence, 669 residues long: Threonine--tRNA ligase (669 aa).

Residues 3-60 enclose the TGS domain; sequence DAQQITLLVDGEETKVTTGTTGAELFFERRDVVVARVNGELKDLDQELPEGAEVEGVT. A catalytic region spans residues 260 to 566; sequence DHRKLGSELD…LTEHYAGAFP (307 aa). Positions 365, 416, and 543 each coordinate Zn(2+).

Belongs to the class-II aminoacyl-tRNA synthetase family. In terms of assembly, homodimer. The cofactor is Zn(2+).

It is found in the cytoplasm. It carries out the reaction tRNA(Thr) + L-threonine + ATP = L-threonyl-tRNA(Thr) + AMP + diphosphate + H(+). Its function is as follows. Catalyzes the attachment of threonine to tRNA(Thr) in a two-step reaction: L-threonine is first activated by ATP to form Thr-AMP and then transferred to the acceptor end of tRNA(Thr). Also edits incorrectly charged L-seryl-tRNA(Thr). This chain is Threonine--tRNA ligase, found in Pseudarthrobacter chlorophenolicus (strain ATCC 700700 / DSM 12829 / CIP 107037 / JCM 12360 / KCTC 9906 / NCIMB 13794 / A6) (Arthrobacter chlorophenolicus).